Consider the following 1441-residue polypeptide: Probable ubiquitin-conjugating enzyme E2 R521 (1441 aa).

Residues 20–40 form a helical membrane-spanning segment; it reads YIHHIIINYITNSILYFFLIM. Residues 63-89 adopt a coiled-coil conformation; the sequence is NQSKLVNTLDIIKDEINKWEEKNTDKD. Residues 180–199 show a composition bias toward basic and acidic residues; it reads VSKDKMKDKSESNSEHEQES. 2 disordered regions span residues 180–207 and 283–305; these read VSKD…SNEI and IFGK…MSKV. Low complexity predominate over residues 286 to 303; the sequence is KSKNSGPSSSKTSISSMS. Positions 340–368 form a coiled coil; it reads TTNEDNNDLDNLINEVERLVQETKDQETK. Positions 505-538 are enriched in low complexity; it reads TVEPVQEVAEEPVQQEVAEEPVQQEVAEEPVQQE. 2 disordered regions span residues 505 to 554 and 577 to 605; these read TVEP…PVQK and NDFS…NNLG. The segment covering 539–549 has biased composition (acidic residues); sequence VAEEPVQEVAE. A UBC core domain is found at 1217-1380; sequence AISRELLSHS…VRFNCMKWAM (164 aa). Residue cysteine 1306 is the Glycyl thioester intermediate of the active site.

Belongs to the ubiquitin-conjugating enzyme family.

Its subcellular location is the membrane. It carries out the reaction S-ubiquitinyl-[E1 ubiquitin-activating enzyme]-L-cysteine + [E2 ubiquitin-conjugating enzyme]-L-cysteine = [E1 ubiquitin-activating enzyme]-L-cysteine + S-ubiquitinyl-[E2 ubiquitin-conjugating enzyme]-L-cysteine.. Its pathway is protein modification; protein ubiquitination. Functionally, catalyzes the covalent attachment of ubiquitin to other proteins. The sequence is that of Probable ubiquitin-conjugating enzyme E2 R521 from Acanthamoeba polyphaga (Amoeba).